Here is a 402-residue protein sequence, read N- to C-terminus: RNA-binding protein 42 (402 aa).

A disordered region spans residues E240–Q275. Over residues E256–Q275 the composition is skewed to basic and acidic residues. Residues F303–W381 form the RRM domain.

This sequence belongs to the RRM RBM42 family.

It localises to the nucleus. Its subcellular location is the cytoplasm. Functionally, may bind RNA. The chain is RNA-binding protein 42 (rbm42) from Danio rerio (Zebrafish).